Consider the following 250-residue polypeptide: Small ribosomal subunit protein uS3 (250 aa).

One can recognise a KH type-2 domain in the interval 39–111; that stretch reads IRTLIKNHYP…KVQINIFEVK (73 aa).

Belongs to the universal ribosomal protein uS3 family. In terms of assembly, part of the 30S ribosomal subunit. Forms a tight complex with proteins S10 and S14.

Its function is as follows. Binds the lower part of the 30S subunit head. Binds mRNA in the 70S ribosome, positioning it for translation. In Phytoplasma vitis (Flavescence doree phytoplasma), this protein is Small ribosomal subunit protein uS3.